The primary structure comprises 256 residues: Isoprenyl transferase (256 aa).

The active site involves Asp-33. Asp-33 lines the Mg(2+) pocket. Substrate is bound by residues 34–37 (GNGR), Trp-38, Arg-46, His-50, and 78–80 (STE). Asn-81 serves as the catalytic Proton acceptor. Substrate contacts are provided by residues Trp-82, Arg-84, Arg-201, and 207-209 (RIS). A Mg(2+)-binding site is contributed by Glu-220.

Belongs to the UPP synthase family. In terms of assembly, homodimer. Requires Mg(2+) as cofactor.

Functionally, catalyzes the condensation of isopentenyl diphosphate (IPP) with allylic pyrophosphates generating different type of terpenoids. The sequence is that of Isoprenyl transferase from Staphylococcus epidermidis (strain ATCC 35984 / DSM 28319 / BCRC 17069 / CCUG 31568 / BM 3577 / RP62A).